Reading from the N-terminus, the 191-residue chain is Thymidine kinase (191 aa).

Residues 9–16 and 85–88 contribute to the ATP site; these read GSMNSGKT and DESQ. Glu-86 (proton acceptor) is an active-site residue. Residues Cys-143, Cys-146, Cys-181, and Cys-184 each coordinate Zn(2+).

It belongs to the thymidine kinase family. In terms of assembly, homotetramer.

It localises to the cytoplasm. The enzyme catalyses thymidine + ATP = dTMP + ADP + H(+). In Listeria monocytogenes serotype 4b (strain F2365), this protein is Thymidine kinase.